Consider the following 422-residue polypeptide: Serine hydroxymethyltransferase (422 aa).

(6S)-5,6,7,8-tetrahydrofolate is bound by residues L119 and G123–L125. Residue K228 is modified to N6-(pyridoxal phosphate)lysine. (6S)-5,6,7,8-tetrahydrofolate-binding positions include E244 and S352–F354.

The protein belongs to the SHMT family. Homodimer. Requires pyridoxal 5'-phosphate as cofactor.

The protein localises to the cytoplasm. It carries out the reaction (6R)-5,10-methylene-5,6,7,8-tetrahydrofolate + glycine + H2O = (6S)-5,6,7,8-tetrahydrofolate + L-serine. The protein operates within one-carbon metabolism; tetrahydrofolate interconversion. It functions in the pathway amino-acid biosynthesis; glycine biosynthesis; glycine from L-serine: step 1/1. Its function is as follows. Catalyzes the reversible interconversion of serine and glycine with tetrahydrofolate (THF) serving as the one-carbon carrier. This reaction serves as the major source of one-carbon groups required for the biosynthesis of purines, thymidylate, methionine, and other important biomolecules. Also exhibits THF-independent aldolase activity toward beta-hydroxyamino acids, producing glycine and aldehydes, via a retro-aldol mechanism. This chain is Serine hydroxymethyltransferase, found in Magnetococcus marinus (strain ATCC BAA-1437 / JCM 17883 / MC-1).